A 426-amino-acid polypeptide reads, in one-letter code: Gamma-glutamyl phosphate reductase (426 aa).

This sequence belongs to the gamma-glutamyl phosphate reductase family.

It localises to the cytoplasm. The catalysed reaction is L-glutamate 5-semialdehyde + phosphate + NADP(+) = L-glutamyl 5-phosphate + NADPH + H(+). It functions in the pathway amino-acid biosynthesis; L-proline biosynthesis; L-glutamate 5-semialdehyde from L-glutamate: step 2/2. Functionally, catalyzes the NADPH-dependent reduction of L-glutamate 5-phosphate into L-glutamate 5-semialdehyde and phosphate. The product spontaneously undergoes cyclization to form 1-pyrroline-5-carboxylate. The chain is Gamma-glutamyl phosphate reductase from Acidovorax ebreus (strain TPSY) (Diaphorobacter sp. (strain TPSY)).